Reading from the N-terminus, the 201-residue chain is ADP-ribosylation factor-related protein 1 (201 aa).

An N-acetylmethionine modification is found at Met-1. GTP contacts are provided by residues Gly-24–Thr-31, Asp-75–Gln-79, and Asn-134–Asp-137.

This sequence belongs to the small GTPase superfamily. Arf family. In terms of assembly, interacts with SYS1.

It localises to the golgi apparatus. The protein resides in the trans-Golgi network. In terms of biological role, trans-Golgi-associated GTPase that regulates protein sorting. Controls the targeting of ARL1 and its effector to the trans-Golgi. Required for the lipidation of chylomicrons in the intestine and required for VLDL lipidation in the liver. The chain is ADP-ribosylation factor-related protein 1 (ARFRP1) from Bos taurus (Bovine).